The sequence spans 195 residues: NADH-quinone oxidoreductase subunit B (195 aa).

4 residues coordinate [4Fe-4S] cluster: Cys74, Cys75, Cys139, and Cys169.

It belongs to the complex I 20 kDa subunit family. In terms of assembly, NDH-1 is composed of 14 different subunits. Subunits NuoB, C, D, E, F, and G constitute the peripheral sector of the complex. [4Fe-4S] cluster is required as a cofactor.

It is found in the cell inner membrane. It carries out the reaction a quinone + NADH + 5 H(+)(in) = a quinol + NAD(+) + 4 H(+)(out). Functionally, NDH-1 shuttles electrons from NADH, via FMN and iron-sulfur (Fe-S) centers, to quinones in the respiratory chain. The immediate electron acceptor for the enzyme in this species is believed to be ubiquinone. Couples the redox reaction to proton translocation (for every two electrons transferred, four hydrogen ions are translocated across the cytoplasmic membrane), and thus conserves the redox energy in a proton gradient. The protein is NADH-quinone oxidoreductase subunit B of Methylobacterium radiotolerans (strain ATCC 27329 / DSM 1819 / JCM 2831 / NBRC 15690 / NCIMB 10815 / 0-1).